Reading from the N-terminus, the 254-residue chain is Axonemal dynein light intermediate polypeptide 1 (254 aa).

The segment at 1–55 (MIPPADSLLKHDNPVLISKNTERKSPKSRPLKVSSPQTVLTAPVPPPPKPKTPLL) is disordered. Residues 175–245 (ALQAEQGKSD…KRTNQQLKAQ (71 aa)) are a coiled coil.

Belongs to the inner dynein arm light chain family.

Its subcellular location is the cell projection. It localises to the cilium. It is found in the flagellum. The protein resides in the dynein axonemal particle. The protein localises to the cytoplasm. Involved in sperm flagellum assembly. The chain is Axonemal dynein light intermediate polypeptide 1 from Xenopus laevis (African clawed frog).